A 348-amino-acid polypeptide reads, in one-letter code: Dihydroorotase (348 aa).

2 residues coordinate Zn(2+): His-17 and His-19. Substrate-binding positions include 19–21 (HLR) and Asn-45. Residues Lys-103, His-140, and His-178 each coordinate Zn(2+). Lys-103 carries the N6-carboxylysine modification. His-140 contacts substrate. Leu-223 serves as a coordination point for substrate. Residue Asp-251 participates in Zn(2+) binding. Asp-251 is an active-site residue. Residues His-255 and Ala-267 each coordinate substrate.

It belongs to the metallo-dependent hydrolases superfamily. DHOase family. Class II DHOase subfamily. In terms of assembly, homodimer. Zn(2+) is required as a cofactor.

The catalysed reaction is (S)-dihydroorotate + H2O = N-carbamoyl-L-aspartate + H(+). It functions in the pathway pyrimidine metabolism; UMP biosynthesis via de novo pathway; (S)-dihydroorotate from bicarbonate: step 3/3. Its function is as follows. Catalyzes the reversible cyclization of carbamoyl aspartate to dihydroorotate. The chain is Dihydroorotase from Salmonella paratyphi A (strain ATCC 9150 / SARB42).